The chain runs to 81 residues: Cytotoxin 1b (81 aa).

The first 21 residues, Met-1 to Thr-21, serve as a signal peptide directing secretion. Cystine bridges form between Cys-24/Cys-42, Cys-35/Cys-59, Cys-63/Cys-74, and Cys-75/Cys-80.

This sequence belongs to the three-finger toxin family. Short-chain subfamily. Type IA cytotoxin sub-subfamily. As to quaternary structure, monomer in solution; Homodimer and oligomer in the presence of negatively charged lipids forming a pore with a size ranging between 20 and 30 Angstroms. As to expression, expressed by the venom gland.

It is found in the secreted. Its subcellular location is the target cell membrane. Functionally, shows cytolytic activity on many different cells by forming pore in lipid membranes. In vivo, increases heart rate or kills the animal by cardiac arrest. In addition, it binds to heparin with high affinity, interacts with Kv channel-interacting protein 1 (KCNIP1) in a calcium-independent manner, and binds to integrin alpha-V/beta-3 (ITGAV/ITGB3) with moderate affinity. This is Cytotoxin 1b from Naja atra (Chinese cobra).